Here is a 153-residue protein sequence, read N- to C-terminus: Aspartate carbamoyltransferase regulatory chain (153 aa).

Zn(2+) is bound by residues Cys109, Cys114, Cys138, and Cys141.

Belongs to the PyrI family. As to quaternary structure, contains catalytic and regulatory chains. The cofactor is Zn(2+).

Functionally, involved in allosteric regulation of aspartate carbamoyltransferase. This chain is Aspartate carbamoyltransferase regulatory chain, found in Vibrio vulnificus (strain YJ016).